Reading from the N-terminus, the 189-residue chain is Peptidyl-tRNA hydrolase (189 aa).

Tyr-16 lines the tRNA pocket. His-21 functions as the Proton acceptor in the catalytic mechanism. The tRNA site is built by Phe-67, Asn-69, and Asn-115.

The protein belongs to the PTH family. As to quaternary structure, monomer.

Its subcellular location is the cytoplasm. The catalysed reaction is an N-acyl-L-alpha-aminoacyl-tRNA + H2O = an N-acyl-L-amino acid + a tRNA + H(+). Hydrolyzes ribosome-free peptidyl-tRNAs (with 1 or more amino acids incorporated), which drop off the ribosome during protein synthesis, or as a result of ribosome stalling. Functionally, catalyzes the release of premature peptidyl moieties from peptidyl-tRNA molecules trapped in stalled 50S ribosomal subunits, and thus maintains levels of free tRNAs and 50S ribosomes. This chain is Peptidyl-tRNA hydrolase, found in Legionella pneumophila subsp. pneumophila (strain Philadelphia 1 / ATCC 33152 / DSM 7513).